The chain runs to 391 residues: Histamine H4 receptor (391 aa).

The Extracellular segment spans residues 1 to 19; that stretch reads MSESNSTGILPPAAQVPLA. A glycan (N-linked (GlcNAc...) asparagine) is linked at Asn5. A helical membrane pass occupies residues 20–40; it reads FLMSSFAFAIMVGNAVVILAF. Residues 41–52 are Cytoplasmic-facing; that stretch reads VVDRNLRHRSNY. Residues 53–73 form a helical membrane-spanning segment; the sequence is FFLNLAISDFLVGLISIPLYI. The Extracellular portion of the chain corresponds to 74–87; the sequence is PHVLFNWNFGSGIC. Cys87 and Cys166 are joined by a disulfide. The chain crosses the membrane as a helical span at residues 88 to 108; the sequence is MFWLITDYLLCTASVYNIVLI. Residues 109 to 131 lie on the Cytoplasmic side of the membrane; the sequence is SYDRYQSVSNAVSYRAQHTGIMK. A helical membrane pass occupies residues 132–152; that stretch reads IVAQMVAVWILAFLVNGPMIL. At 153 to 174 the chain is on the extracellular side; the sequence is ASDSWKNSTNTKDCEPGFVTEW. N-linked (GlcNAc...) asparagine glycosylation occurs at Asn159. The helical transmembrane segment at 175–195 threads the bilayer; the sequence is YILTITMLLEFLLPVISVAYF. The Cytoplasmic portion of the chain corresponds to 196-306; sequence NVQIYWSLWK…LLRGRKLARS (111 aa). The interval 238–258 is disordered; it reads TSNPGLKESAASRHSESPRRK. Residues 247–256 show a composition bias toward basic and acidic residues; sequence AASRHSESPR. Residues 307–327 form a helical membrane-spanning segment; that stretch reads LAILLSAFAICWAPYCLFTIV. Residues 328 to 343 lie on the Extracellular side of the membrane; that stretch reads LSTYPRTERPKSVWYS. A helical transmembrane segment spans residues 344–364; it reads IAFWLQWFNSFVNPFLYPLCH. Over 365-391 the chain is Cytoplasmic; that stretch reads RRFQKAFWKILCVTKQPALSQNQSVSS.

This sequence belongs to the G-protein coupled receptor 1 family. Interacts with TSPAN4.

The protein localises to the cell membrane. Its function is as follows. The H4 subclass of histamine receptors could mediate the histamine signals in peripheral tissues. Displays a significant level of constitutive activity (spontaneous activity in the absence of agonist). This chain is Histamine H4 receptor (Hrh4), found in Mus musculus (Mouse).